The primary structure comprises 1100 residues: Conjugal transfer protein TraA (1100 aa).

404 to 411 (GRAGAGKT) is a binding site for ATP.

It belongs to the MobA/MobL family.

The polypeptide is Conjugal transfer protein TraA (traA) (Agrobacterium fabrum (strain C58 / ATCC 33970) (Agrobacterium tumefaciens (strain C58))).